A 1434-amino-acid polypeptide reads, in one-letter code: DNA-directed RNA polymerase subunit beta (1434 aa).

Belongs to the RNA polymerase beta chain family. As to quaternary structure, the RNAP catalytic core consists of 2 alpha, 1 beta, 1 beta' and 1 omega subunit. When a sigma factor is associated with the core the holoenzyme is formed, which can initiate transcription.

The catalysed reaction is RNA(n) + a ribonucleoside 5'-triphosphate = RNA(n+1) + diphosphate. Functionally, DNA-dependent RNA polymerase catalyzes the transcription of DNA into RNA using the four ribonucleoside triphosphates as substrates. The sequence is that of DNA-directed RNA polymerase subunit beta from Ureaplasma parvum serovar 3 (strain ATCC 27815 / 27 / NCTC 11736).